The primary structure comprises 607 residues: Hemagglutinin glycoprotein (607 aa).

Residues 1–38 are Intravirion-facing; sequence MFSHQDKVGAFYKNNARANSSKLSLVTDEVEERRSPWF. A helical; Signal-anchor for type II membrane protein transmembrane segment spans residues 39–55; it reads LSILLILLVGILILLTI. The Virion surface portion of the chain corresponds to 56 to 607; the sequence is TGIRFHQVVK…IRFSCDRLDP (552 aa). 6 N-linked (GlcNAc...) asparagine; by host glycosylation sites follow: Asn-149, Asn-276, Asn-391, Asn-422, Asn-456, and Asn-587.

The protein belongs to the paramyxoviruses hemagglutinin-neuraminidase family. Non-sialidase subfamily.

Its subcellular location is the virion membrane. The protein resides in the host membrane. Attaches the virus to cell receptors and thereby initiating infection. Binding of H protein to the receptor induces a conformational change that allows the F protein to trigger virion/cell membranes fusion. The chain is Hemagglutinin glycoprotein (H) from Phocidae (true seals).